A 455-amino-acid polypeptide reads, in one-letter code: Glutamyl-tRNA reductase (455 aa).

Substrate-binding positions include 49–52 (TCNR), S109, 114–116 (EAQ), and Q120. The active-site Nucleophile is the C50. Position 190–195 (190–195 (GAGAMG)) interacts with NADP(+).

This sequence belongs to the glutamyl-tRNA reductase family. As to quaternary structure, homodimer.

The enzyme catalyses (S)-4-amino-5-oxopentanoate + tRNA(Glu) + NADP(+) = L-glutamyl-tRNA(Glu) + NADPH + H(+). It participates in porphyrin-containing compound metabolism; protoporphyrin-IX biosynthesis; 5-aminolevulinate from L-glutamyl-tRNA(Glu): step 1/2. Catalyzes the NADPH-dependent reduction of glutamyl-tRNA(Glu) to glutamate 1-semialdehyde (GSA). The protein is Glutamyl-tRNA reductase of Salinispora arenicola (strain CNS-205).